The chain runs to 500 residues: MIALFGEKLRFFDTTLRDGEQTPGVSLTPDQKCIIATALAAVGVDVIEAGSAAASPGDRAAIRQIANAGLGVEVCTFVRAMTGDIDAAVECGVDSVHLVVPVSDLHIQKKLRKDRATVAAMANKAVDYAKERGLIVELSGEDASRADQSFLAEVFASGVEHGADRLCFCDTVGLMTPERTALMIPPLAAIAPLSIHCHDDLGFGLATTIAALKAGASCAHVTVNGLGERAGNTPLEEVVMALERLYGYDTRIRTERLYPLSVLVSRLTGVPLPAQKPIVGELAFTHESGIHADGILKDPSTYEPLAPETVGRTRRIILGKHSGSASVEAALQESGYRPTPAQLQVIVARVKHLGDQGHRVTDGDLAAIAEAVLEVSTEPVLVLKQFTVVSGSGVLPTASVTLLVNGAEVTNAATGTGPVDAAIEALRRSVADVAAISLLEYHVDAITGGTDALVEVTATLSNGEMTRTSRGAETDIIAASVEAVVQGMNRLLRRRDEDRR.

The region spanning 9-258 is the Pyruvate carboxyltransferase domain; sequence LRFFDTTLRD…DTRIRTERLY (250 aa).

Belongs to the alpha-IPM synthase/homocitrate synthase family. Homodimer.

The catalysed reaction is pyruvate + acetyl-CoA + H2O = (3R)-citramalate + CoA + H(+). It functions in the pathway amino-acid biosynthesis; L-isoleucine biosynthesis; 2-oxobutanoate from pyruvate: step 1/3. In terms of biological role, catalyzes the condensation of pyruvate and acetyl-coenzyme A to form (R)-citramalate. The polypeptide is Putative (R)-citramalate synthase CimA (Methanosphaerula palustris (strain ATCC BAA-1556 / DSM 19958 / E1-9c)).